Here is a 247-residue protein sequence, read N- to C-terminus: ATP synthase subunit a, chloroplastic (247 aa).

Helical transmembrane passes span 38–58 (QVLITSWVVIAILLISTILVV), 95–115 (VPFIGTLFLFIFVSNWSGALL), 134–154 (INTTVALALLTSVAYFYAGIS), 199–219 (LVVVVLVSLVPLVIPIPVMFL), and 220–240 (GLFTSGIQALIFATLAAAYIG).

Belongs to the ATPase A chain family. F-type ATPases have 2 components, CF(1) - the catalytic core - and CF(0) - the membrane proton channel. CF(1) has five subunits: alpha(3), beta(3), gamma(1), delta(1), epsilon(1). CF(0) has four main subunits: a, b, b' and c.

The protein localises to the plastid. It localises to the chloroplast thylakoid membrane. Its function is as follows. Key component of the proton channel; it plays a direct role in the translocation of protons across the membrane. This Cicer arietinum (Chickpea) protein is ATP synthase subunit a, chloroplastic.